The primary structure comprises 299 residues: Single myb histone 1 (299 aa).

In terms of domain architecture, HTH myb-type spans 1 to 61; sequence MGAPKQRWTP…KWRNLSVTAG (61 aa). Positions 28-57 form a DNA-binding region, H-T-H motif; that stretch reads WRTILRDSDFSALLRLRSNVDLKDKWRNLS. Residues 124-192 enclose the H15 domain; sequence SVARLDDLIL…KVNQKYRIAP (69 aa). A coiled-coil region spans residues 238–279; that stretch reads EEAAAFAAKAVAEAEVAIAEAEEAARVAEAAENDAEAAKAFL.

It belongs to the histone H1/H5 family. SMH subfamily. Forms a homodimer and heterodimers. In terms of tissue distribution, expressed in leaves.

The protein resides in the nucleus. Its subcellular location is the chromosome. The protein localises to the nucleolus. It is found in the telomere. Its function is as follows. Binds preferentially double-stranded telomeric repeats 5'-TTTAGGG-3', but can also bind to the single G-rich and C-rich telomeric strand. The sequence is that of Single myb histone 1 (SMH1) from Zea mays (Maize).